The following is a 64-amino-acid chain: Putative isoleucine--tRNA ligase (64 aa).

It belongs to the class-I aminoacyl-tRNA synthetase family. In terms of assembly, member of a complex that includes annexin.

The enzyme catalyses tRNA(Ile) + L-isoleucine + ATP = L-isoleucyl-tRNA(Ile) + AMP + diphosphate. The protein is Putative isoleucine--tRNA ligase of Physarum polycephalum (Slime mold).